We begin with the raw amino-acid sequence, 216 residues long: Probable transaldolase (216 aa).

Lys83 serves as the catalytic Schiff-base intermediate with substrate.

Belongs to the transaldolase family. Type 3B subfamily.

It is found in the cytoplasm. It carries out the reaction D-sedoheptulose 7-phosphate + D-glyceraldehyde 3-phosphate = D-erythrose 4-phosphate + beta-D-fructose 6-phosphate. Its pathway is carbohydrate degradation; pentose phosphate pathway; D-glyceraldehyde 3-phosphate and beta-D-fructose 6-phosphate from D-ribose 5-phosphate and D-xylulose 5-phosphate (non-oxidative stage): step 2/3. In terms of biological role, transaldolase is important for the balance of metabolites in the pentose-phosphate pathway. The chain is Probable transaldolase from Thermoanaerobacter sp. (strain X514).